A 336-amino-acid polypeptide reads, in one-letter code: Glyceraldehyde-3-phosphate dehydrogenase (336 aa).

Residues 12–13 (RI), D34, and R79 contribute to the NAD(+) site. Residues 150–152 (SCT), T181, 210–211 (TG), and R233 each bind D-glyceraldehyde 3-phosphate. C151 acts as the Nucleophile in catalysis. N315 lines the NAD(+) pocket.

This sequence belongs to the glyceraldehyde-3-phosphate dehydrogenase family. In terms of assembly, homotetramer.

It localises to the cytoplasm. It carries out the reaction D-glyceraldehyde 3-phosphate + phosphate + NAD(+) = (2R)-3-phospho-glyceroyl phosphate + NADH + H(+). Its pathway is carbohydrate degradation; glycolysis; pyruvate from D-glyceraldehyde 3-phosphate: step 1/5. Involved in osmoadaptation. This Emericella nidulans (strain FGSC A4 / ATCC 38163 / CBS 112.46 / NRRL 194 / M139) (Aspergillus nidulans) protein is Glyceraldehyde-3-phosphate dehydrogenase (gpdA).